Consider the following 256-residue polypeptide: Triosephosphate isomerase (256 aa).

9-11 is a substrate binding site; it reads NWK. Catalysis depends on His94, which acts as the Electrophile. The active-site Proton acceptor is the Glu166. Residues Gly172, Ser211, and 232–233 each bind substrate; that span reads GG.

It belongs to the triosephosphate isomerase family. Homodimer.

The protein localises to the cytoplasm. It carries out the reaction D-glyceraldehyde 3-phosphate = dihydroxyacetone phosphate. It participates in carbohydrate biosynthesis; gluconeogenesis. The protein operates within carbohydrate degradation; glycolysis; D-glyceraldehyde 3-phosphate from glycerone phosphate: step 1/1. In terms of biological role, involved in the gluconeogenesis. Catalyzes stereospecifically the conversion of dihydroxyacetone phosphate (DHAP) to D-glyceraldehyde-3-phosphate (G3P). This chain is Triosephosphate isomerase, found in Natranaerobius thermophilus (strain ATCC BAA-1301 / DSM 18059 / JW/NM-WN-LF).